The sequence spans 395 residues: LIM/homeobox protein Lhx3 (395 aa).

LIM zinc-binding domains are found at residues 28–78 and 87–141; these read CAGC…CKDD and CAAC…CKAD. Residues 154–213 constitute a DNA-binding region (homeobox); sequence AKRPRTTITAKQLETLKNAYNNSPKPARHVREQLSSETGLDMRVVQVWFQNRRAKEKRLK. Disordered regions lie at residues 208–304 and 363–383; these read KEKR…QDQY and GPSS…PVSP. A compositionally biased stretch (polar residues) spans 257-278; that stretch reads DEPSMSEMNHSNGIYNSLNDSS.

In terms of assembly, interacts with ldb1 and with the N-terminus of rnf12. In terms of tissue distribution, in dorsal regions at neural tube and tailbud stages and in adults predominantly in the pituitary gland and weakly in the eye and brain.

The protein resides in the nucleus. Transcription factor. May be involved in the specification and maintenance of differentiation of distinct neuronal and neuroendocrine tissues. Early marker for the pituitary and pineal lineages, it may be involved in specifying these lineages. The polypeptide is LIM/homeobox protein Lhx3 (lhx3) (Xenopus laevis (African clawed frog)).